Reading from the N-terminus, the 158-residue chain is MIRVAHSRKVQLDEIDRAILRLLQEDGRMSYSEISRRINVPESTVRARVNRLIREGVIRKFAALINPFKAGYEIVAFIAIDAEPAKVRQVVEELAKLPEVDVLGIVTGAHDIFMQVTVRDLQELERFILEKMAKIDGIRSTETSILTSVKKWGYARVF.

In terms of domain architecture, HTH asnC-type spans 12 to 73; sequence LDEIDRAILR…LINPFKAGYE (62 aa). The H-T-H motif DNA-binding region spans 31 to 50; the sequence is YSEISRRINVPESTVRARVN.

This is an uncharacterized protein from Pyrococcus abyssi (strain GE5 / Orsay).